We begin with the raw amino-acid sequence, 338 residues long: Lipoate-protein ligase A (338 aa).

The BPL/LPL catalytic domain maps to 29–216; the sequence is PATQRVLFLW…AFFAHYGERV (188 aa). Residues Arg71, 76-79, and Lys134 each bind ATP; that span reads GAVF. Lys134 is a binding site for (R)-lipoate.

This sequence belongs to the LplA family. In terms of assembly, monomer.

Its subcellular location is the cytoplasm. It carries out the reaction L-lysyl-[lipoyl-carrier protein] + (R)-lipoate + ATP = N(6)-[(R)-lipoyl]-L-lysyl-[lipoyl-carrier protein] + AMP + diphosphate + H(+). It functions in the pathway protein modification; protein lipoylation via exogenous pathway; protein N(6)-(lipoyl)lysine from lipoate: step 1/2. Its pathway is protein modification; protein lipoylation via exogenous pathway; protein N(6)-(lipoyl)lysine from lipoate: step 2/2. Functionally, catalyzes both the ATP-dependent activation of exogenously supplied lipoate to lipoyl-AMP and the transfer of the activated lipoyl onto the lipoyl domains of lipoate-dependent enzymes. The sequence is that of Lipoate-protein ligase A from Escherichia coli (strain 55989 / EAEC).